Consider the following 228-residue polypeptide: Cytochrome P450 monooxygenase ataY (228 aa).

Heme is bound at residue C216.

The protein belongs to the cytochrome P450 family. Heme serves as cofactor.

It participates in mycotoxin biosynthesis. In terms of biological role, cytochrome P450 monooxygenase; part of the gene cluster that mediates the biosynthesis of acetylaranotin, a member of the epipolythiodioxopiperazine (ETP) class of toxins characterized by a disulfide-bridged cyclic dipeptide. The first step of acetylaranotin biosynthesis is performed by the NRPS ataP which produces diketopiperazine cyclo-L-Phe-L-Phe via the condensation of 2 phenylalanines (L-Phe). The ataC domain of ataTC then catalyzes the formation of bishydroxylation of cyclo-L-Phe-L-Phe. The glutathione S-transferase domain ataG in ataIMG further catalyzes the conjugation of two glutathiones to the bishydroxylated intermediate. Next, the dipeptidase ataJ removes the Glu residues. The following step is performed by the carbon sulfur lyase domain ataI of ataIMG which may convert the bis-cysteinyl adduct to yield an epidithiol intermediate. The ataT domain from ataTC then catalyzes the oxidation of the free dithiols, followed by a cyclization step catalyzed by the cytochrome P450 ataF. AtaF probably acts as an epoxidase to promote a dual epoxidation formation at C8 and C9 along with C8' and C9', followed by the spontaneous nucleophilic attack of the amide nitrogens N10 and N10' to yield an intermediate with the pyrrolidine partial structure. The final steps of acetylaranotin biosynthesis involve the acetylation and ring rearrangement of an epitetrathiodiketopiperazine intermediate to produce acetylaranotin. AtaH probably catalyzes the acetylation of epitetrathiodiketopiperazine to produce a diacetate and ataY is responsible for the formation of the dihydrooxepin moiety that converts the diacetate intermediate to acetylaranotin via acetylapoaranotin. Both enzymes could function independently in the absence of the other. The acetylaranotin bis-thiomethyltransferase ataS located outside of acetylaranotin gene cluster is the main thiomethyltransferase responsible for converting acetylaranotin and its related intermediates to their methylated forms. The protein is Cytochrome P450 monooxygenase ataY of Aspergillus terreus (strain NIH 2624 / FGSC A1156).